A 565-amino-acid polypeptide reads, in one-letter code: Putative serine protease pcp-1 (565 aa).

Residues 1–17 (MRWFLVLLLVALVSVEA) form the signal peptide. 3 N-linked (GlcNAc...) asparagine glycosylation sites follow: Asn-69, Asn-107, and Asn-126. Ser-177 (charge relay system) is an active-site residue. Asn-240, Asn-244, Asn-257, Asn-271, Asn-319, and Asn-347 each carry an N-linked (GlcNAc...) asparagine glycan. Active-site charge relay system residues include Asp-451 and His-479.

The protein belongs to the peptidase S28 family.

The polypeptide is Putative serine protease pcp-1 (pcp-1) (Caenorhabditis elegans).